Reading from the N-terminus, the 273-residue chain is Putative methyltransferase Cher3 (273 aa).

The CheR-type methyltransferase domain maps to 1 to 273 (MTSERNTDIE…VKPQRIFRKS (273 aa)). Residues Ser76, Arg80, Glu114, Asp137, 199–200 (SL), and 215–216 (RN) each bind S-adenosyl-L-methionine.

In Pseudomonas putida (strain ATCC 47054 / DSM 6125 / CFBP 8728 / NCIMB 11950 / KT2440), this protein is Putative methyltransferase Cher3 (cheR3).